Here is a 137-residue protein sequence, read N- to C-terminus: Small ribosomal subunit protein uS12 (137 aa).

The disordered stretch occupies residues 1 to 55; it reads MPTINQLVRKPRQSKIKKSDSPALNKGFNSKKKKFTDLNSPQKRGVCTRVGTMTP. Asp102 is subject to 3-methylthioaspartic acid. The segment at 118 to 137 is disordered; sequence SGVDGRRQGRSLYGTKKPKN.

Belongs to the universal ribosomal protein uS12 family. In terms of assembly, part of the 30S ribosomal subunit. Contacts proteins S8 and S17. May interact with IF1 in the 30S initiation complex.

Its function is as follows. With S4 and S5 plays an important role in translational accuracy. Interacts with and stabilizes bases of the 16S rRNA that are involved in tRNA selection in the A site and with the mRNA backbone. Located at the interface of the 30S and 50S subunits, it traverses the body of the 30S subunit contacting proteins on the other side and probably holding the rRNA structure together. The combined cluster of proteins S8, S12 and S17 appears to hold together the shoulder and platform of the 30S subunit. In Staphylococcus aureus (strain Mu3 / ATCC 700698), this protein is Small ribosomal subunit protein uS12.